Reading from the N-terminus, the 79-residue chain is Acyl carrier protein (79 aa).

Positions 2–77 constitute a Carrier domain; that stretch reads SEIGERVKKI…DATKFLEKNA (76 aa). S37 is modified (O-(pantetheine 4'-phosphoryl)serine).

It belongs to the acyl carrier protein (ACP) family. In terms of processing, 4'-phosphopantetheine is transferred from CoA to a specific serine of apo-ACP by AcpS. This modification is essential for activity because fatty acids are bound in thioester linkage to the sulfhydryl of the prosthetic group.

The protein resides in the cytoplasm. It functions in the pathway lipid metabolism; fatty acid biosynthesis. Carrier of the growing fatty acid chain in fatty acid biosynthesis. This chain is Acyl carrier protein, found in Rhodopseudomonas palustris (strain HaA2).